Reading from the N-terminus, the 248-residue chain is E3 ubiquitin-protein ligase BIG BROTHER (248 aa).

An RING-type; atypical zinc finger spans residues 197 to 238; it reads CVICQLKYKIGERQMNLPCKHVYHSECISKWLSINKVCPVCN.

As to quaternary structure, interacts with the E2 ubiquitin conjugating enzyme UBC10 via the RING domain. Interacts with DA1. Post-translationally, auto-ubiquitinated. In terms of tissue distribution, mostly expressed in inflorescence, and, to a lower extent, in seedlings, roots, stems, leaves and siliques.

It catalyses the reaction S-ubiquitinyl-[E2 ubiquitin-conjugating enzyme]-L-cysteine + [acceptor protein]-L-lysine = [E2 ubiquitin-conjugating enzyme]-L-cysteine + N(6)-ubiquitinyl-[acceptor protein]-L-lysine.. It functions in the pathway protein modification; protein ubiquitination. E3 ubiquitin-protein ligase that limits organ size, and possibly seed size, in a dose-dependent manner. Negatively regulates the duration of cell proliferation in leaves and petals independently of the major phytohormones (e.g. auxin, cytokinin, gibberellin, brassinosteroids, ethylene, abscisic acid, jasmonic acid), probably by targeting growth stimulators for degradation. Limits the proliferation of root meristematic cells. Polyubiquitinates DA1. Involved in the promotion of leaf senescence, in addition to its function in restricting plant growth. Possesses E3 ubiquitin-protein ligase activity in vitro. The sequence is that of E3 ubiquitin-protein ligase BIG BROTHER (BB) from Arabidopsis thaliana (Mouse-ear cress).